The primary structure comprises 220 residues: tRNA (guanine-N(7)-)-methyltransferase (220 aa).

Residues E46, D71, D100, and D122 each coordinate S-adenosyl-L-methionine. Residue D122 is part of the active site. Residues K126, D158, and 196–199 (TEYE) contribute to the substrate site.

Belongs to the class I-like SAM-binding methyltransferase superfamily. TrmB family.

The catalysed reaction is guanosine(46) in tRNA + S-adenosyl-L-methionine = N(7)-methylguanosine(46) in tRNA + S-adenosyl-L-homocysteine. Its pathway is tRNA modification; N(7)-methylguanine-tRNA biosynthesis. Functionally, catalyzes the formation of N(7)-methylguanine at position 46 (m7G46) in tRNA. The chain is tRNA (guanine-N(7)-)-methyltransferase from Malacoplasma penetrans (strain HF-2) (Mycoplasma penetrans).